We begin with the raw amino-acid sequence, 239 residues long: MEIFPAIDLKEGRCVRLYQGEFSKETVMNEDPVAQAIIFEKFGAKRLHIVDLDGAVAGESLNLSVIERICKAVRIPVQVGGGIRSLVAVEKLFSVGVDKVILGTAALYDKTFLEEAVLLYKEKIIVGIDAKNGFVATRGWLDVSEISYIDLAKQMENIGVQTIVFTDISKDGTLAGPNIGQLELLQKSVAIRLIASGGVASIQDVKKLNDMNIYGVIIGKALYEKTIDLEEVLEVTKLC.

D8 (proton acceptor) is an active-site residue. The Proton donor role is filled by D129.

The protein belongs to the HisA/HisF family.

Its subcellular location is the cytoplasm. It catalyses the reaction 1-(5-phospho-beta-D-ribosyl)-5-[(5-phospho-beta-D-ribosylamino)methylideneamino]imidazole-4-carboxamide = 5-[(5-phospho-1-deoxy-D-ribulos-1-ylimino)methylamino]-1-(5-phospho-beta-D-ribosyl)imidazole-4-carboxamide. It functions in the pathway amino-acid biosynthesis; L-histidine biosynthesis; L-histidine from 5-phospho-alpha-D-ribose 1-diphosphate: step 4/9. This chain is 1-(5-phosphoribosyl)-5-[(5-phosphoribosylamino)methylideneamino] imidazole-4-carboxamide isomerase, found in Bacillus thuringiensis (strain Al Hakam).